Reading from the N-terminus, the 540-residue chain is Membrane protein insertase YidC (540 aa).

A run of 5 helical transmembrane segments spans residues 1–21 (MVVQ…MMLD), 351–371 (NWGI…FPLT), 418–438 (LGGC…YYML), 464–484 (ILPI…PSSI), and 497–517 (PLIF…YYII).

It belongs to the OXA1/ALB3/YidC family. Type 1 subfamily. Interacts with the Sec translocase complex via SecD. Specifically interacts with transmembrane segments of nascent integral membrane proteins during membrane integration.

The protein resides in the cell membrane. Its function is as follows. Required for the insertion and/or proper folding and/or complex formation of integral membrane proteins into the membrane. Involved in integration of membrane proteins that insert both dependently and independently of the Sec translocase complex, as well as at least some lipoproteins. Aids folding of multispanning membrane proteins. The sequence is that of Membrane protein insertase YidC from Wigglesworthia glossinidia brevipalpis.